The primary structure comprises 231 residues: DNA mismatch repair protein MutH (231 aa).

This sequence belongs to the MutH family.

Its subcellular location is the cytoplasm. Functionally, sequence-specific endonuclease that cleaves unmethylated GATC sequences. It is involved in DNA mismatch repair. The protein is DNA mismatch repair protein MutH of Klebsiella pneumoniae (strain 342).